A 222-amino-acid polypeptide reads, in one-letter code: Eukaryotic translation initiation factor 3 subunit K (222 aa).

The PCI domain occupies tyrosine 46 to lysine 208.

It belongs to the eIF-3 subunit K family. Component of the eukaryotic translation initiation factor 3 (eIF-3) complex. The eIF-3 complex interacts with pix.

Its subcellular location is the cytoplasm. Component of the eukaryotic translation initiation factor 3 (eIF-3) complex, which is involved in protein synthesis of a specialized repertoire of mRNAs and, together with other initiation factors, stimulates binding of mRNA and methionyl-tRNAi to the 40S ribosome. The eIF-3 complex specifically targets and initiates translation of a subset of mRNAs involved in cell proliferation. This Drosophila erecta (Fruit fly) protein is Eukaryotic translation initiation factor 3 subunit K.